A 421-amino-acid polypeptide reads, in one-letter code: Testin (421 aa).

The 108-residue stretch at 92–199 (MILTNPVPAK…GDVKLPSEMD (108 aa)) folds into the PET domain. A disordered region spans residues 135-165 (QPVAGSEGAQYRKKQLAKQLPEHDQDPSKCH). Positions 154 to 165 (LPEHDQDPSKCH) are enriched in basic and acidic residues. 3 LIM zinc-binding domains span residues 234-297 (YSCY…CDSE), 299-359 (PRCA…NHAV), and 362-421 (QGCH…KMMS).

Belongs to the prickle / espinas / testin family. As to quaternary structure, interacts via LIM domain 1 with ZYX. Interacts (via LIM domain 3) with ENAH and VASP. Interacts with ALKBH4, talin, actin, alpha-actinin, GRIP1 and PXN. Interacts (via LIM domain 2) with ACTL7A (via N-terminus). Heterodimer with ACTL7A; the heterodimer interacts with ENAH to form a heterotrimer.

Its subcellular location is the cytoplasm. It is found in the cell junction. It localises to the focal adhesion. Scaffold protein that may play a role in cell adhesion, cell spreading and in the reorganization of the actin cytoskeleton. Plays a role in the regulation of cell proliferation. May act as a tumor suppressor. The sequence is that of Testin (TES) from Dasypus novemcinctus (Nine-banded armadillo).